A 237-amino-acid chain; its full sequence is Large ribosomal subunit protein uL1 (237 aa).

The protein belongs to the universal ribosomal protein uL1 family. Part of the 50S ribosomal subunit.

Functionally, binds directly to 23S rRNA. The L1 stalk is quite mobile in the ribosome, and is involved in E site tRNA release. Its function is as follows. Protein L1 is also a translational repressor protein, it controls the translation of the L11 operon by binding to its mRNA. In Rickettsia typhi (strain ATCC VR-144 / Wilmington), this protein is Large ribosomal subunit protein uL1.